Here is a 563-residue protein sequence, read N- to C-terminus: Phosphomethylpyrimidine synthase (563 aa).

The disordered stretch occupies residues proline 95 to serine 115. Residues asparagine 200, methionine 229, tyrosine 258, histidine 294, serine 314 to glycine 316, aspartate 355 to arginine 358, and glutamate 394 contribute to the substrate site. Histidine 398 lines the Zn(2+) pocket. Tyrosine 421 is a binding site for substrate. Residue histidine 462 participates in Zn(2+) binding. [4Fe-4S] cluster is bound by residues cysteine 544, cysteine 547, and cysteine 552.

This sequence belongs to the ThiC family. [4Fe-4S] cluster serves as cofactor.

The catalysed reaction is 5-amino-1-(5-phospho-beta-D-ribosyl)imidazole + S-adenosyl-L-methionine = 4-amino-2-methyl-5-(phosphooxymethyl)pyrimidine + CO + 5'-deoxyadenosine + formate + L-methionine + 3 H(+). It functions in the pathway cofactor biosynthesis; thiamine diphosphate biosynthesis. Functionally, catalyzes the synthesis of the hydroxymethylpyrimidine phosphate (HMP-P) moiety of thiamine from aminoimidazole ribotide (AIR) in a radical S-adenosyl-L-methionine (SAM)-dependent reaction. The chain is Phosphomethylpyrimidine synthase from Chlorobium phaeobacteroides (strain BS1).